A 165-amino-acid chain; its full sequence is Type VI lipase immunity protein Tli3 (165 aa).

The signal sequence occupies residues 1–21 (MKCKTLLIACLFGLGSAQALA).

Interacts with the Tle3 toxin.

It localises to the periplasm. Immunity protein that neutralizes the toxicity of the P.aeruginosa antibacterial toxin Tle3 in the periplasm to protect the cell from fratricide intoxication. The chain is Type VI lipase immunity protein Tli3 from Pseudomonas aeruginosa (strain ATCC 15692 / DSM 22644 / CIP 104116 / JCM 14847 / LMG 12228 / 1C / PRS 101 / PAO1).